Reading from the N-terminus, the 231-residue chain is Ureidoacrylate amidohydrolase RutB (231 aa).

Catalysis depends on Asp25, which acts as the Proton acceptor. Lys134 is a catalytic residue. Catalysis depends on Cys167, which acts as the Nucleophile.

It belongs to the isochorismatase family. RutB subfamily.

The enzyme catalyses (Z)-3-ureidoacrylate + H2O + H(+) = (Z)-3-aminoacrylate + NH4(+) + CO2. It catalyses the reaction (Z)-3-ureidoacrylate + H2O = (Z)-3-aminoacrylate + carbamate + H(+). The catalysed reaction is (Z)-2-methylureidoacrylate + H2O + H(+) = (Z)-2-methylaminoacrylate + NH4(+) + CO2. In terms of biological role, hydrolyzes ureidoacrylate to form aminoacrylate and carbamate. The carbamate hydrolyzes spontaneously, thereby releasing one of the nitrogen atoms of the pyrimidine ring as ammonia and one of its carbon atoms as CO2. The polypeptide is Ureidoacrylate amidohydrolase RutB (Escherichia coli O139:H28 (strain E24377A / ETEC)).